The following is a 356-amino-acid chain: Holliday junction branch migration complex subunit RuvB (356 aa).

The segment at 4–190 (TDKLAAERII…FGIVARLEFY (187 aa)) is large ATPase domain (RuvB-L). ATP is bound by residues leucine 29, arginine 30, glycine 71, lysine 74, threonine 75, threonine 76, 137–139 (EDY), arginine 180, tyrosine 190, and arginine 227. Residue threonine 75 coordinates Mg(2+). A small ATPAse domain (RuvB-S) region spans residues 191–261 (DAEQLSRIVR…VADAALAMLD (71 aa)). A head domain (RuvB-H) region spans residues 264–356 (PVGFDLMDRK…NLWDTPDAEC (93 aa)). Arginine 300, arginine 319, and arginine 324 together coordinate DNA.

Belongs to the RuvB family. As to quaternary structure, homohexamer. Forms an RuvA(8)-RuvB(12)-Holliday junction (HJ) complex. HJ DNA is sandwiched between 2 RuvA tetramers; dsDNA enters through RuvA and exits via RuvB. An RuvB hexamer assembles on each DNA strand where it exits the tetramer. Each RuvB hexamer is contacted by two RuvA subunits (via domain III) on 2 adjacent RuvB subunits; this complex drives branch migration. In the full resolvosome a probable DNA-RuvA(4)-RuvB(12)-RuvC(2) complex forms which resolves the HJ.

It localises to the cytoplasm. It catalyses the reaction ATP + H2O = ADP + phosphate + H(+). Its function is as follows. The RuvA-RuvB-RuvC complex processes Holliday junction (HJ) DNA during genetic recombination and DNA repair, while the RuvA-RuvB complex plays an important role in the rescue of blocked DNA replication forks via replication fork reversal (RFR). RuvA specifically binds to HJ cruciform DNA, conferring on it an open structure. The RuvB hexamer acts as an ATP-dependent pump, pulling dsDNA into and through the RuvAB complex. RuvB forms 2 homohexamers on either side of HJ DNA bound by 1 or 2 RuvA tetramers; 4 subunits per hexamer contact DNA at a time. Coordinated motions by a converter formed by DNA-disengaged RuvB subunits stimulates ATP hydrolysis and nucleotide exchange. Immobilization of the converter enables RuvB to convert the ATP-contained energy into a lever motion, pulling 2 nucleotides of DNA out of the RuvA tetramer per ATP hydrolyzed, thus driving DNA branch migration. The RuvB motors rotate together with the DNA substrate, which together with the progressing nucleotide cycle form the mechanistic basis for DNA recombination by continuous HJ branch migration. Branch migration allows RuvC to scan DNA until it finds its consensus sequence, where it cleaves and resolves cruciform DNA. This chain is Holliday junction branch migration complex subunit RuvB, found in Burkholderia pseudomallei (strain 668).